A 364-amino-acid polypeptide reads, in one-letter code: MALALLEDWCRILSVDDQKSLMVMGIPVDCSEDEIQEVLQEILKPLGRYKLLGKIFRKQENANAVLLELLEDPEVSVIPSKVQGKGGIWKVIFKTPNQDTEFLERLNLFLEKEGQTVSGMFRALGHQGLSPAAMPCISPELLAHVLGQVIAHPPQPLLPMRYRKLRVFSGSAVPAPEEEPFEVWLEQATEIVKEWPVAEAEKKRWLMESLRGPALDLMHIVQADNPSISVEECLEAFKQVFGNLESRRTSQVKYLKTYQEEGEKVSAYVLRLETLLRRAVEKRAIPRNIADQIRLEQVMAGASLSEVLWCRLRELKDQGRPPSFLQLMKVIREEEEEEATFENENTEEPEGGDGYGHWGNEAND.

The residue at position 2 (alanine 2) is an N-acetylalanine. Acidic residues predominate over residues 335–351; sequence EEEEATFENENTEEPEG. The disordered stretch occupies residues 335–364; that stretch reads EEEEATFENENTEEPEGGDGYGHWGNEAND.

Belongs to the PNMA family.

The protein localises to the nucleus. Its subcellular location is the nucleolus. The sequence is that of Paraneoplastic antigen Ma2 homolog (PNMA2) from Bos taurus (Bovine).